The following is a 349-amino-acid chain: Nicotinate-nucleotide--dimethylbenzimidazole phosphoribosyltransferase (349 aa).

Residues 1 to 20 (MEFATVSPPDPGTAAAARAR) form a disordered region. E313 functions as the Proton acceptor in the catalytic mechanism.

Belongs to the CobT family.

The enzyme catalyses 5,6-dimethylbenzimidazole + nicotinate beta-D-ribonucleotide = alpha-ribazole 5'-phosphate + nicotinate + H(+). Its pathway is nucleoside biosynthesis; alpha-ribazole biosynthesis; alpha-ribazole from 5,6-dimethylbenzimidazole: step 1/2. Functionally, catalyzes the synthesis of alpha-ribazole-5'-phosphate from nicotinate mononucleotide (NAMN) and 5,6-dimethylbenzimidazole (DMB). The sequence is that of Nicotinate-nucleotide--dimethylbenzimidazole phosphoribosyltransferase from Mycolicibacterium paratuberculosis (strain ATCC BAA-968 / K-10) (Mycobacterium paratuberculosis).